The primary structure comprises 359 residues: Oplophorus-luciferin 2-monooxygenase non-catalytic subunit (359 aa).

Positions 1 to 39 (MAVNFKFSLLTITIVVNILVYCNASAIKFDVDLEKVPSN) are cleaved as a signal peptide. LRR repeat units follow at residues 135-158 (AATL…EMSQ), 160-180 (TKLN…ALSS), 181-203 (DTLA…AFQT), 228-251 (SPKL…AIKL), 255-278 (GPTT…AVEG), 280-300 (QGIL…VWRP), 302-325 (LENL…MWLI), and 331-356 (LAKI…VFHA).

In terms of assembly, heterotetramer of a catalytic 19 kDa and a non-catalytic 35 kDa subunit.

The protein resides in the secreted. Functionally, non-catalytic subunit of oplophorus-luciferin 2-monooxygenase. May stabilize the active conformation of the catalytic subunit. This is Oplophorus-luciferin 2-monooxygenase non-catalytic subunit from Oplophorus gracilirostris (Luminous shrimp).